Here is a 207-residue protein sequence, read N- to C-terminus: Ion-translocating oxidoreductase complex subunit G (207 aa).

The helical transmembrane segment at Gly11 to Leu31 threads the bilayer. The residue at position 175 (Thr175) is an FMN phosphoryl threonine.

It belongs to the RnfG family. In terms of assembly, the complex is composed of six subunits: RnfA, RnfB, RnfC, RnfD, RnfE and RnfG. FMN serves as cofactor.

It is found in the cell inner membrane. In terms of biological role, part of a membrane-bound complex that couples electron transfer with translocation of ions across the membrane. The polypeptide is Ion-translocating oxidoreductase complex subunit G (Haemophilus influenzae (strain ATCC 51907 / DSM 11121 / KW20 / Rd)).